The following is a 541-amino-acid chain: Molybdate transporter 1 (541 aa).

5 helical membrane passes run 24–44 (LLLS…PLLL), 58–78 (LLFS…PLPV), 98–118 (TVAA…TGGL), 137–157 (AGMS…GWLW), and 168–188 (GLGE…GLVV). The interval 193–213 (QQQQQQQSGEKPQERRKKRSK) is disordered. 2 consecutive transmembrane segments (helical) span residues 214–234 (MPVQ…FAVV) and 287–307 (MAIA…SALA). The disordered stretch occupies residues 317–366 (PQLYADDESSDSPLSPSPSASSSSLSSAPPQTPSAETPKPLSSPTSAEEG). Residues 327–351 (DSPLSPSPSASSSSLSSAPPQTPSA) are compositionally biased toward low complexity. 2 helical membrane passes run 413 to 433 (IILL…PGLL) and 435 to 455 (LLGK…GVEL). The tract at residues 510-541 (TEKGRGGEQGLLGEEEEEEEQGRVDEESPLLR) is disordered.

The protein belongs to the SLC26A/SulP transporter (TC 2.A.53) family.

It localises to the vacuole membrane. Its function is as follows. Exports stored molybdate from the vacuole into the cytosol, making it available for molybdate cofactor (Moco) biosynthesis. Plays a role in molybdate homeostasis as high cytosolic levels of molybdate are toxic to cells. Not required for molybdate import into cells. This Neurospora crassa (strain ATCC 24698 / 74-OR23-1A / CBS 708.71 / DSM 1257 / FGSC 987) protein is Molybdate transporter 1.